The sequence spans 607 residues: Transporter aclS (607 aa).

12 helical membrane passes run 67–87 (LGGSLVASSLSVWQTMVAVVL), 91–111 (IAAIVAILIGYIGAEWHIGFP), 152–172 (LTVVGFAFQSYTGGLCVTAIL), 192–212 (VTTQQIIGWAIFNIISIPVLY), 221–241 (LMIGMNIMSFAALLGIMIWSL), 262–282 (SLGFGIMQGITTVVGTLSIAL), 317–337 (VFGQWFTFIIIGSIMPLFGCL), 364–384 (AAAVFAGIGLVSSQLALNVVD), 423–443 (GCYVGLILGMALCPWELLASA), 445–465 (TFVSVISSFSIFMAPFCGIHI), 500–520 (GVLPWLVGWVPLLPGFMHSIN), and 531–551 (HLYALGFPYGLLSSMAIHTLV). The segment at 583–607 (NKDSTEEDSDRSLRRESREVVETKV) is disordered. Basic and acidic residues predominate over residues 592-607 (DRSLRRESREVVETKV).

Belongs to the purine-cytosine permease (2.A.39) family.

Its subcellular location is the membrane. Functionally, transporter; part of the gene cluster that mediates the biosynthesis of aspirochlorine (or antibiotic A30641), an unusual halogenated spiro compound with distinctive antifungal properties due to selective inhibition of protein biosynthesis, and which is also active against bacteria, viruses, and murine tumor cells. In Aspergillus oryzae (strain ATCC 42149 / RIB 40) (Yellow koji mold), this protein is Transporter aclS.